Here is a 274-residue protein sequence, read N- to C-terminus: Hydroxyethylthiazole kinase (274 aa).

Met50 provides a ligand contact to substrate. ATP contacts are provided by Arg126 and Ser171. Ala200 is a substrate binding site.

Belongs to the Thz kinase family. Mg(2+) serves as cofactor.

The enzyme catalyses 5-(2-hydroxyethyl)-4-methylthiazole + ATP = 4-methyl-5-(2-phosphooxyethyl)-thiazole + ADP + H(+). It participates in cofactor biosynthesis; thiamine diphosphate biosynthesis; 4-methyl-5-(2-phosphoethyl)-thiazole from 5-(2-hydroxyethyl)-4-methylthiazole: step 1/1. Catalyzes the phosphorylation of the hydroxyl group of 4-methyl-5-beta-hydroxyethylthiazole (THZ). The chain is Hydroxyethylthiazole kinase from Acinetobacter baylyi (strain ATCC 33305 / BD413 / ADP1).